The primary structure comprises 195 residues: MKKYLFVALAALVLTGCLSRPPEPEQPQPPVTVEPVTPPVVEEPQPPVTEPVPQPPKIQQLDWLSSVQPLVNQMLKADGVNPGSVLLLDSVKNNTNGSLQTAKATSALHKALASNQTFSIVPEAQLATAKQTLGLSADDSLGSRSKAIGLARIVSAQYVLYSDVSGDVKSPTLDMQLMLVQSGEIVWSGNGAVTH.

Residues 1-16 form the signal peptide; that stretch reads MKKYLFVALAALVLTG. Cys-17 carries the N-palmitoyl cysteine lipid modification. Cys-17 carries the S-diacylglycerol cysteine lipid modification. Residues 19–55 are disordered; that stretch reads SRPPEPEQPQPPVTVEPVTPPVVEEPQPPVTEPVPQP. Pro residues-rich tracts occupy residues 24–38 and 44–55; these read PEQP…PVTP and PQPPVTEPVPQP.

It belongs to the LpoB family. Interacts with PBP1b.

It is found in the cell outer membrane. Regulator of peptidoglycan synthesis that is essential for the function of penicillin-binding protein 1B (PBP1b). In Serratia proteamaculans (strain 568), this protein is Penicillin-binding protein activator LpoB.